The sequence spans 349 residues: 1-acylglycerol-3-phosphate O-acyltransferase ABHD5 (349 aa).

A2 bears the N-acetylalanine mark. Positions 77 to 184 (PLVLLHGFGG…LVEPWGFPER (108 aa)) constitute an AB hydrolase-1 domain. S122 is modified (phosphoserine). The HXXXXD motif signature appears at 327–332 (HYVYAD).

It belongs to the peptidase S33 family. ABHD4/ABHD5 subfamily. In terms of assembly, interacts with ADRP, PLIN and PNPLA2. Interacts with PLIN5; promotes interaction with PNPLA2.

Its subcellular location is the cytoplasm. The protein resides in the lipid droplet. The enzyme catalyses a 1-acyl-sn-glycero-3-phosphate + an acyl-CoA = a 1,2-diacyl-sn-glycero-3-phosphate + CoA. The catalysed reaction is 1-(9Z-octadecenoyl)-sn-glycero-3-phosphate + (9Z)-octadecenoyl-CoA = 1,2-di-(9Z-octadecenoyl)-sn-glycero-3-phosphate + CoA. It catalyses the reaction 1-(9Z-octadecenoyl)-sn-glycero-3-phosphate + hexadecanoyl-CoA = 1-(9Z)-octadecenoyl-2-hexadecanoyl-sn-glycero-3-phosphate + CoA. It carries out the reaction 1-(9Z-octadecenoyl)-sn-glycero-3-phosphate + octadecanoyl-CoA = 1-(9Z-octadecenoyl)-2-octadecanoyl-sn-glycero-3-phosphate + CoA. The enzyme catalyses 1-(9Z-octadecenoyl)-sn-glycero-3-phosphate + (5Z,8Z,11Z,14Z)-eicosatetraenoyl-CoA = 1-(9Z)-octadecenoyl-2-(5Z,8Z,11Z,14Z)-eicosatetraenoyl-sn-glycero-3-phosphate + CoA. The catalysed reaction is eicosanoyl-CoA + 1-(9Z-octadecenoyl)-sn-glycero-3-phosphate = 1-(9Z)-octadecenoyl-2-eicosanoyl-sn-glycero-3-phosphate + CoA. It catalyses the reaction 1-hexadecanoyl-sn-glycero-3-phosphate + (9Z)-octadecenoyl-CoA = 1-hexadecanoyl-2-(9Z-octadecenoyl)-sn-glycero-3-phosphate + CoA. It carries out the reaction 1-octadecanoyl-sn-glycero-3-phosphate + (9Z)-octadecenoyl-CoA = 1-octadecanoyl-2-(9Z-octadecenoyl)-sn-glycero-3-phosphate + CoA. The enzyme catalyses 1-(5Z,8Z,11Z,14Z-eicosatetraenoyl)-sn-glycero-3-phosphate + (9Z)-octadecenoyl-CoA = 1-(5Z,8Z,11Z,14Z)-eicosatetraenoyl-2-(9Z)-octadecenoyl-sn-glycero-3-phosphate + CoA. Acyltransferase activity is inhibited by detergents such as Triton X-100 and 3-[(3-cholamidopropyl)dimethylammonio]-1-propanesulfonate (CHAPS). Acyltransferase activity is inhibited by the presence of magnesium and calcium. Coenzyme A-dependent lysophosphatidic acid acyltransferase that catalyzes the transfer of an acyl group on a lysophosphatidic acid. Functions preferentially with 1-oleoyl-lysophosphatidic acid followed by 1-palmitoyl-lysophosphatidic acid, 1-stearoyl-lysophosphatidic acid and 1-arachidonoyl-lysophosphatidic acid as lipid acceptor. Functions preferentially with arachidonoyl-CoA followed by oleoyl-CoA as acyl group donors. Functions in phosphatidic acid biosynthesis. May regulate the cellular storage of triacylglycerol through activation of the phospholipase PNPLA2. Involved in keratinocyte differentiation. Regulates lipid droplet fusion. The chain is 1-acylglycerol-3-phosphate O-acyltransferase ABHD5 from Pongo abelii (Sumatran orangutan).